We begin with the raw amino-acid sequence, 706 residues long: Elongation factor G (706 aa).

The region spanning 8-290 (KRYRNIGIVA…GVIEYMPSPT (283 aa)) is the tr-type G domain. Residues 17–24 (AHVDAGKT), 88–92 (DTPGH), and 142–145 (NKMD) contribute to the GTP site.

This sequence belongs to the TRAFAC class translation factor GTPase superfamily. Classic translation factor GTPase family. EF-G/EF-2 subfamily.

It is found in the cytoplasm. Catalyzes the GTP-dependent ribosomal translocation step during translation elongation. During this step, the ribosome changes from the pre-translocational (PRE) to the post-translocational (POST) state as the newly formed A-site-bound peptidyl-tRNA and P-site-bound deacylated tRNA move to the P and E sites, respectively. Catalyzes the coordinated movement of the two tRNA molecules, the mRNA and conformational changes in the ribosome. In Chromohalobacter salexigens (strain ATCC BAA-138 / DSM 3043 / CIP 106854 / NCIMB 13768 / 1H11), this protein is Elongation factor G.